A 1226-amino-acid polypeptide reads, in one-letter code: AF4/FMR2 family member 3 (1226 aa).

Residues 24–37 show a composition bias toward basic and acidic residues; sequence RNALRRKERERRNQ. 5 disordered regions span residues 24–65, 116–164, 197–299, 323–496, and 523–728; these read RNAL…GDEL, SRAQ…RATQ, ERPP…GETN, KVEP…SNQY, and IKST…SINA. Residues 42 to 52 are compositionally biased toward polar residues; sequence DDGTFNSSYSL. Residues 123–132 are compositionally biased toward low complexity; it reads SSICSTTTST. Composition is skewed to polar residues over residues 251–261 and 334–344; these read LKSSSETSVHC and KDSQLVSSGHN. The segment covering 381–392 has biased composition (low complexity); that stretch reads QQAAQRTALRAL. The span at 396 to 408 shows a compositional bias: polar residues; the sequence is AVVQQPNCRTSVP. Residues 409 to 445 are compositionally biased toward low complexity; it reads SSKGSSSSSSSGSSSSSSDSESSSGSDSETESSSSES. Positions 485 to 496 are enriched in polar residues; it reads QNESHGSESNQY. Basic and acidic residues predominate over residues 523–533; it reads IKSTCKEEQRP. 2 stretches are compositionally biased toward low complexity: residues 550–561 and 569–579; these read PPAAVAVAVSAA and CAPAENAPAPA. A compositionally biased stretch (basic and acidic residues) spans 589–607; it reads RRTERTSAGDGANCHRPEE. The span at 668–678 shows a compositional bias: low complexity; the sequence is TESSSSSSSSD. Over residues 692 to 705 the composition is skewed to polar residues; it reads KAQTVAASASSGND. The residue at position 755 (S755) is a Phosphoserine. Disordered stretches follow at residues 783–856, 879–964, and 1100–1138; these read PQEP…LSAN, PISP…RDCK, and AAQAPSPWGASGKSTGTPSPMSPNPSPASSVGSQGSLSN. Residues 830 to 842 are compositionally biased toward basic and acidic residues; that stretch reads REIKKSQGEKDSS. Residues 843 to 856 are compositionally biased toward polar residues; sequence SRLATSTSNTLSAN. Residue S881 is modified to Phosphoserine. The span at 894–909 shows a compositional bias: polar residues; sequence EDLTSSSRPNGNSLFT.

Belongs to the AF4 family. In terms of tissue distribution, preferentially expressed in lymphoid tissues, highest levels being found in the thymus.

The protein localises to the nucleus. Its function is as follows. Putative transcription activator that may function in lymphoid development and oncogenesis. Binds, in vitro, to double-stranded DNA. This Homo sapiens (Human) protein is AF4/FMR2 family member 3.